A 618-amino-acid polypeptide reads, in one-letter code: tRNA 5-methylaminomethyl-2-thiouridine biosynthesis bifunctional protein MnmC (618 aa).

Positions 1-231 (MLQTYAPIDF…KRHMLSAVYE (231 aa)) are tRNA (mnm(5)s(2)U34)-methyltransferase. An FAD-dependent cmnm(5)s(2)U34 oxidoreductase region spans residues 256 to 618 (IGAGIAGATT…KDIIRGHLNN (363 aa)).

It in the N-terminal section; belongs to the methyltransferase superfamily. tRNA (mnm(5)s(2)U34)-methyltransferase family. In the C-terminal section; belongs to the DAO family. The cofactor is FAD.

The protein localises to the cytoplasm. The enzyme catalyses 5-aminomethyl-2-thiouridine(34) in tRNA + S-adenosyl-L-methionine = 5-methylaminomethyl-2-thiouridine(34) in tRNA + S-adenosyl-L-homocysteine + H(+). Its function is as follows. Catalyzes the last two steps in the biosynthesis of 5-methylaminomethyl-2-thiouridine (mnm(5)s(2)U) at the wobble position (U34) in tRNA. Catalyzes the FAD-dependent demodification of cmnm(5)s(2)U34 to nm(5)s(2)U34, followed by the transfer of a methyl group from S-adenosyl-L-methionine to nm(5)s(2)U34, to form mnm(5)s(2)U34. This chain is tRNA 5-methylaminomethyl-2-thiouridine biosynthesis bifunctional protein MnmC, found in Dichelobacter nodosus (strain VCS1703A).